Consider the following 232-residue polypeptide: MSIVNSIRAQIPPIHREGYPFIGGFALISLLLFWLWTPLGWIGVVLTIWCALFFRDPVRVTPVRDDLVVAPADGRVSMVVSMVPPAELGLGDKPLLRISIFMSVFNCHVNRAPVAGRVERIVYSPGKFINADLDKASEDNERNSMVISTPGGQIGVIQIAGLVARRIVSFVRVGQVLGAGERFGLIRFGSRLDVYLPDGAKALVSPGQTSIAGETVLADFRQGDGGRSYRAA.

Serine 190 functions as the Schiff-base intermediate with substrate; via pyruvic acid in the catalytic mechanism. Serine 190 carries the pyruvic acid (Ser); by autocatalysis modification.

This sequence belongs to the phosphatidylserine decarboxylase family. PSD-A subfamily. Heterodimer of a large membrane-associated beta subunit and a small pyruvoyl-containing alpha subunit. Requires pyruvate as cofactor. Post-translationally, is synthesized initially as an inactive proenzyme. Formation of the active enzyme involves a self-maturation process in which the active site pyruvoyl group is generated from an internal serine residue via an autocatalytic post-translational modification. Two non-identical subunits are generated from the proenzyme in this reaction, and the pyruvate is formed at the N-terminus of the alpha chain, which is derived from the carboxyl end of the proenzyme. The post-translation cleavage follows an unusual pathway, termed non-hydrolytic serinolysis, in which the side chain hydroxyl group of the serine supplies its oxygen atom to form the C-terminus of the beta chain, while the remainder of the serine residue undergoes an oxidative deamination to produce ammonia and the pyruvoyl prosthetic group on the alpha chain.

The protein resides in the cell membrane. It catalyses the reaction a 1,2-diacyl-sn-glycero-3-phospho-L-serine + H(+) = a 1,2-diacyl-sn-glycero-3-phosphoethanolamine + CO2. The protein operates within phospholipid metabolism; phosphatidylethanolamine biosynthesis; phosphatidylethanolamine from CDP-diacylglycerol: step 2/2. Its function is as follows. Catalyzes the formation of phosphatidylethanolamine (PtdEtn) from phosphatidylserine (PtdSer). The sequence is that of Phosphatidylserine decarboxylase proenzyme from Rhodopseudomonas palustris (strain BisB18).